Reading from the N-terminus, the 72-residue chain is Large ribosomal subunit protein bL31 (72 aa).

The Zn(2+) site is built by Cys-16, Cys-18, Cys-37, and Cys-40.

The protein belongs to the bacterial ribosomal protein bL31 family. Type A subfamily. Part of the 50S ribosomal subunit. The cofactor is Zn(2+).

Its function is as follows. Binds the 23S rRNA. In Idiomarina loihiensis (strain ATCC BAA-735 / DSM 15497 / L2-TR), this protein is Large ribosomal subunit protein bL31.